Consider the following 156-residue polypeptide: Ribosomal RNA large subunit methyltransferase H (156 aa).

S-adenosyl-L-methionine is bound by residues L73, G104, and 123-128 (LSPLTL).

The protein belongs to the RNA methyltransferase RlmH family. As to quaternary structure, homodimer.

Its subcellular location is the cytoplasm. The enzyme catalyses pseudouridine(1915) in 23S rRNA + S-adenosyl-L-methionine = N(3)-methylpseudouridine(1915) in 23S rRNA + S-adenosyl-L-homocysteine + H(+). Functionally, specifically methylates the pseudouridine at position 1915 (m3Psi1915) in 23S rRNA. In Yersinia pseudotuberculosis serotype O:1b (strain IP 31758), this protein is Ribosomal RNA large subunit methyltransferase H.